A 207-amino-acid chain; its full sequence is Prolactin (207 aa).

The N-terminal stretch at 1–20 (KSRLYFAVTVLMCAFVSING) is a signal peptide. 2 disulfides stabilise this stretch: C66/C180 and C197/C207.

Belongs to the somatotropin/prolactin family. As to expression, pituitary gland.

It localises to the secreted. The polypeptide is Prolactin (prl) (Hypophthalmichthys molitrix (Silver carp)).